We begin with the raw amino-acid sequence, 320 residues long: Aspartate carbamoyltransferase catalytic subunit (320 aa).

Residues Arg57 and Thr58 each contribute to the carbamoyl phosphate site. Lys85 is a binding site for L-aspartate. Arg107, His141, and Gln144 together coordinate carbamoyl phosphate. L-aspartate contacts are provided by Arg174 and Arg228. 2 residues coordinate carbamoyl phosphate: Gly269 and Pro270.

It belongs to the aspartate/ornithine carbamoyltransferase superfamily. ATCase family. As to quaternary structure, heterododecamer (2C3:3R2) of six catalytic PyrB chains organized as two trimers (C3), and six regulatory PyrI chains organized as three dimers (R2).

The enzyme catalyses carbamoyl phosphate + L-aspartate = N-carbamoyl-L-aspartate + phosphate + H(+). The protein operates within pyrimidine metabolism; UMP biosynthesis via de novo pathway; (S)-dihydroorotate from bicarbonate: step 2/3. Its function is as follows. Catalyzes the condensation of carbamoyl phosphate and aspartate to form carbamoyl aspartate and inorganic phosphate, the committed step in the de novo pyrimidine nucleotide biosynthesis pathway. This chain is Aspartate carbamoyltransferase catalytic subunit, found in Mycobacterium ulcerans (strain Agy99).